The chain runs to 102 residues: Putative pterin-4-alpha-carbinolamine dehydratase (102 aa).

Belongs to the pterin-4-alpha-carbinolamine dehydratase family.

It catalyses the reaction (4aS,6R)-4a-hydroxy-L-erythro-5,6,7,8-tetrahydrobiopterin = (6R)-L-erythro-6,7-dihydrobiopterin + H2O. This Burkholderia ambifaria (strain ATCC BAA-244 / DSM 16087 / CCUG 44356 / LMG 19182 / AMMD) (Burkholderia cepacia (strain AMMD)) protein is Putative pterin-4-alpha-carbinolamine dehydratase.